A 634-amino-acid polypeptide reads, in one-letter code: MSHTPKSAGSSHAPVNSQTALVIGAIGVVFGDIGTSPLYTLKEAFSPHYGLTPDHDTVLGILSLVFWALMLVVTLKYVTAIMRADNDGEGGIMALTALAQRTLPGGSRSMYVVGILGIFGASLFFGDGVITPAISVLSAVEGLEVAAPKLEPFVVPITLVVLSMLFLAQRFGTERVGKAFGPITLLWFFALGAIGVYNMARAPEVLHALNPWWGVRFFAQHNWHAVFVLGAVVLAVTGGEALYADMGHFGAKAIRRSWQFVVLPMLTLTYLGQGALVLRNPAAVSNPFYEAVPEWALYPMIVLATAATVIASQALITGAYSVASQAMQLGYIPRMHIRHTSHSTIGQIYVPAVNWCLLALVAVAVIGFGDSASLATAYGVSVTGTMLITTVLMIIYARANPRVPAPLLWLFALVFLAVDCAFFYANIIKFLDGAWFPLLLGLILFTLMRTWRRGRKLLHDEIRKDGIKLDTFLPGLMLAPPVRVPGTAVFLTADPMVVPHALMHNLKHNKVLHERNVFLTVETLQVPYAAAGKRLKIDAIGDEFYRVHVRFGFMETPDVPLALMRSCDQGGIYFDPMDTTYFASRETIVASANRGMPIWRDKLFALMHRNAAPATGFFRIPGNRLVELGAQVEI.

12 helical membrane passes run 21-41 (LVIG…LYTL), 58-78 (VLGI…LKYV), 110-130 (MYVV…DGVI), 147-167 (APKL…MLFL), 179-199 (AFGP…VYNM), 223-243 (WHAV…EALY), 258-278 (WQFV…ALVL), 296-316 (ALYP…QALI), 348-368 (IYVP…VIGF), 377-397 (AYGV…IIYA), 403-423 (VPAP…CAFF), and 427-447 (IIKF…LFTL).

The protein belongs to the HAK/KUP transporter (TC 2.A.72) family.

It localises to the cell inner membrane. It catalyses the reaction K(+)(in) + H(+)(in) = K(+)(out) + H(+)(out). In terms of biological role, transport of potassium into the cell. Likely operates as a K(+):H(+) symporter. This is Probable potassium transport system protein Kup from Xanthomonas axonopodis pv. citri (strain 306).